A 644-amino-acid polypeptide reads, in one-letter code: Chaperone protein DnaK (644 aa).

Phosphothreonine; by autocatalysis is present on threonine 199. Positions 550–584 are enriched in basic and acidic residues; that stretch reads ADKLDESEKQRAQDEIKRGREAMESGDLERMKASR. 2 disordered regions span residues 550-586 and 599-644; these read ADKL…SRDS and YSQA…EDKK. The span at 600–623 shows a compositional bias: low complexity; that stretch reads SQAGPEQGAPGAEAGAGASQGASG.

The protein belongs to the heat shock protein 70 family.

Its function is as follows. Acts as a chaperone. The protein is Chaperone protein DnaK of Leptospira biflexa serovar Patoc (strain Patoc 1 / Ames).